Here is a 345-residue protein sequence, read N- to C-terminus: Nuclear hormone receptor family nhr-176 (345 aa).

Positions 7–82 (IQPCLVCGQS…AGMLEKMVFS (76 aa)) form a DNA-binding region, nuclear receptor. Residues 10–30 (CLVCGQSSNSILFGAPSCRAC) form an NR C4-type zinc finger. An NR C4-type; degenerate zinc finger spans residues 46-65 (NNCLGECSFAKKSMKPCQSC). One can recognise an NR LBD domain in the interval 92–342 (FEKSILEELE…CPLYAISTNS (251 aa)). The AF-2 stretch occupies residues 331 to 342 (SGCPLYAISTNS).

The protein resides in the nucleus. Nuclear hormone receptor. Binds to xenobiotic ligand thiabendazole (TBZ), in vitro. Involved in the up-regulation of phase I detoxification genes, such as probable cytochrome P450 cyp-35d1, in response to TBZ. This Caenorhabditis elegans protein is Nuclear hormone receptor family nhr-176.